We begin with the raw amino-acid sequence, 222 residues long: Superoxide dismutase [Mn], mitochondrial (222 aa).

The N-terminal 24 residues, 1-24, are a transit peptide targeting the mitochondrion; that stretch reads MLSRAVCGTGRQLAPALGYLGSRQ. H50 contacts Mn(2+). 3'-nitrotyrosine is present on Y58. K68 and K75 each carry N6-acetyllysine; alternate. An N6-succinyllysine; alternate mark is found at K68 and K75. A Mn(2+)-binding site is contributed by H98. At K114 the chain carries N6-acetyllysine. An N6-acetyllysine; alternate mark is found at K122 and K130. N6-succinyllysine; alternate is present on residues K122 and K130. Mn(2+) is bound by residues D183 and H187. K202 is modified (N6-acetyllysine).

This sequence belongs to the iron/manganese superoxide dismutase family. As to quaternary structure, homotetramer. The cofactor is Mn(2+). In terms of processing, nitrated under oxidative stress. Nitration coupled with oxidation inhibits the catalytic activity. Acetylation at Lys-122 decreases enzymatic activity. Deacetylated by SIRT3 upon exposure to ionizing radiations or after long fasting. Post-translationally, polyubiquitinated; leading to proteasomal degradation. Deubiquitinated by USP36 which increases protein stability.

The protein resides in the mitochondrion matrix. It carries out the reaction 2 superoxide + 2 H(+) = H2O2 + O2. Destroys superoxide anion radicals which are normally produced within the cells and which are toxic to biological systems. This chain is Superoxide dismutase [Mn], mitochondrial (SOD2), found in Macaca nemestrina (Pig-tailed macaque).